The following is a 127-amino-acid chain: Large ribosomal subunit protein uL24B (127 aa).

Belongs to the universal ribosomal protein uL24 family. In terms of assembly, component of the large ribosomal subunit (LSU). Mature yeast ribosomes consist of a small (40S) and a large (60S) subunit. The 40S small subunit contains 1 molecule of ribosomal RNA (18S rRNA) and 33 different proteins (encoded by 57 genes). The large 60S subunit contains 3 rRNA molecules (25S, 5.8S and 5S rRNA) and 46 different proteins (encoded by 81 genes).

The protein resides in the cytoplasm. In terms of biological role, component of the ribosome, a large ribonucleoprotein complex responsible for the synthesis of proteins in the cell. The small ribosomal subunit (SSU) binds messenger RNAs (mRNAs) and translates the encoded message by selecting cognate aminoacyl-transfer RNA (tRNA) molecules. The large subunit (LSU) contains the ribosomal catalytic site termed the peptidyl transferase center (PTC), which catalyzes the formation of peptide bonds, thereby polymerizing the amino acids delivered by tRNAs into a polypeptide chain. The nascent polypeptides leave the ribosome through a tunnel in the LSU and interact with protein factors that function in enzymatic processing, targeting, and the membrane insertion of nascent chains at the exit of the ribosomal tunnel. The protein is Large ribosomal subunit protein uL24B of Saccharomyces cerevisiae (strain ATCC 204508 / S288c) (Baker's yeast).